Here is a 303-residue protein sequence, read N- to C-terminus: Coenzyme PQQ synthesis protein B (303 aa).

Belongs to the PqqB family.

It participates in cofactor biosynthesis; pyrroloquinoline quinone biosynthesis. In terms of biological role, may be involved in the transport of PQQ or its precursor to the periplasm. The chain is Coenzyme PQQ synthesis protein B from Acinetobacter baumannii (strain SDF).